Consider the following 346-residue polypeptide: Protein STAR1 (346 aa).

The tract at residues 23 to 48 is disordered; the sequence is QRPPPNGTVHACSKSRPPQLEPGKVG. In terms of domain architecture, ABC transporter spans 112–344; sequence IRVRGLTRRS…KHPMARRFLE (233 aa). 146–153 contacts ATP; it reads GPSGSGKS.

The protein belongs to the ABC transporter superfamily. ABCI family. Interacts with STAR2. Expressed in roots.

The protein localises to the membrane. Functionally, associates with STAR2 to form a functional transmembrane ABC transporter required for detoxification of aluminum (Al) in roots. Can specifically transport UDP-glucose. The polypeptide is Protein STAR1 (Oryza sativa subsp. japonica (Rice)).